The sequence spans 708 residues: Protein SUPPRESSOR OF MAX2 1A (708 aa).

A disordered region spans residues 248–283; it reads QMASKPQEKAASPPGSPVRTDLVLGPKQTETTPEKT. Positions 537–541 match the EAR motif; sequence FDLNE.

The protein belongs to the ClpA/ClpB family.

Its function is as follows. Probable component of a transcriptional corepressor complex that acts downstream of MAX2 to negatively regulate karrikins/strigolactone responses. Involved in the (-)-germacrene D signaling pathway influencing plant fitness and occurring in the stigma in a KAI2IA-dependent manner. The sequence is that of Protein SUPPRESSOR OF MAX2 1A from Petunia hybrida (Petunia).